A 396-amino-acid polypeptide reads, in one-letter code: Phosphoglycerate kinase (396 aa).

Residues 22–24 (DLN), Arg-37, 60–63 (HFGR), Arg-118, and Arg-151 each bind substrate. Residues Lys-201, Glu-323, and 353–356 (GGDT) each bind ATP.

It belongs to the phosphoglycerate kinase family. As to quaternary structure, monomer.

The protein resides in the cytoplasm. The enzyme catalyses (2R)-3-phosphoglycerate + ATP = (2R)-3-phospho-glyceroyl phosphate + ADP. The protein operates within carbohydrate degradation; glycolysis; pyruvate from D-glyceraldehyde 3-phosphate: step 2/5. This Xanthobacter autotrophicus (strain ATCC BAA-1158 / Py2) protein is Phosphoglycerate kinase.